The following is a 502-amino-acid chain: Serine/threonine-protein kinase SKS1 (502 aa).

The Protein kinase domain maps to 10–338 (FRITAQIGSG…SEVSSLTSFT (329 aa)). ATP-binding positions include 16–24 (IGSGAYGLV) and lysine 39. Aspartate 186 (proton acceptor) is an active-site residue. Low complexity-rich tracts occupy residues 376 to 391 (QEQQ…QVQE) and 399 to 410 (EQIQNQEQAQQQ). The interval 376–439 (QEQQQQQQQQ…GSMEKYEYTN (64 aa)) is disordered. Acidic residues predominate over residues 411–420 (QEEEDAEPES).

It belongs to the protein kinase superfamily. Ser/Thr protein kinase family.

The catalysed reaction is L-seryl-[protein] + ATP = O-phospho-L-seryl-[protein] + ADP + H(+). The enzyme catalyses L-threonyl-[protein] + ATP = O-phospho-L-threonyl-[protein] + ADP + H(+). Functionally, may have a role in glucose regulation. In Saccharomyces cerevisiae (strain ATCC 204508 / S288c) (Baker's yeast), this protein is Serine/threonine-protein kinase SKS1 (SKS1).